Consider the following 976-residue polypeptide: Poly(ADP-ribose) glycohydrolase (976 aa).

Met1 is subject to N-acetylmethionine. Positions 1 to 69 (MNAGPGCEPC…GRAGQHRGSA (69 aa)) are disordered. The segment at 1–456 (MNAGPGCEPC…LSPDKKWLGT (456 aa)) is A-domain. The Nuclear localization signal signature appears at 10–16 (CTKRPRW). Ser22 carries the phosphoserine modification. Over residues 37 to 46 (RVLDPKDAHV) the composition is skewed to basic and acidic residues. Ser68 bears the Phosphoserine mark. A PIP-box (PCNA interacting peptide) motif is present at residues 76-83 (QKTITSWM). Residues Ser133 and Ser137 each carry the phosphoserine modification. Thr139 carries the post-translational modification Phosphothreonine. The interval 183–350 (SNANIDRSPQ…PSRFQARDAD (168 aa)) is disordered. Basic and acidic residues-rich tracts occupy residues 191 to 206 (PQND…ENRD) and 222 to 233 (TTEDEQAREAKS). Ser197 carries the post-translational modification Phosphoserine. A Phosphothreonine modification is found at Thr199. Phosphoserine occurs at positions 261, 264, 286, 291, 298, 302, and 316. Acidic residues predominate over residues 316-331 (SEADEETSPGFDEQED). The segment covering 332-342 (GSSSQTANKPS) has biased composition (polar residues). An N6-acetyllysine modification is found at Lys340. Residue Ser448 is modified to Phosphoserine. A catalytic region spans residues 610–795 (QPIPLLKQKM…TEQYSEYTGY (186 aa)). 726-727 (IE) provides a ligand contact to substrate. The active site involves Asp737. 2 residues coordinate substrate: Asn740 and Gln754. Residues Glu755 and Glu756 contribute to the active site. Substrate-binding positions include Tyr795 and 869 to 874 (NWGCGA).

The protein belongs to the poly(ADP-ribose) glycohydrolase family. In terms of assembly, interacts with PCNA. Interacts with NUDT5. As to expression, ubiquitously expressed.

Its subcellular location is the nucleus. The protein localises to the cytoplasm. It localises to the mitochondrion. It is found in the mitochondrion matrix. It catalyses the reaction [(1''-&gt;2')-ADP-alpha-D-ribose](n) + H2O = [(1''-&gt;2')-ADP-alpha-D-ribose](n-1) + ADP-D-ribose. In terms of biological role, poly(ADP-ribose) glycohydrolase that degrades poly(ADP-ribose) by hydrolyzing the ribose-ribose bonds present in poly(ADP-ribose). PARG acts both as an endo- and exoglycosidase, releasing poly(ADP-ribose) of different length as well as ADP-ribose monomers. It is however unable to cleave the ester bond between the terminal ADP-ribose and ADP-ribosylated residues, leaving proteins that are mono-ADP-ribosylated. Poly(ADP-ribose) is synthesized after DNA damage is only present transiently and is rapidly degraded by PARG. Required to prevent detrimental accumulation of poly(ADP-ribose) upon prolonged replicative stress, while it is not required for recovery from transient replicative stress. Responsible for the prevalence of mono-ADP-ribosylated proteins in cells, thanks to its ability to degrade poly(ADP-ribose) without cleaving the terminal protein-ribose bond. Required for retinoid acid-dependent gene transactivation, probably by removing poly(ADP-ribose) from histone demethylase KDM4D, allowing chromatin derepression at RAR-dependent gene promoters. Involved in the synthesis of ATP in the nucleus, together with PARP1, NMNAT1 and NUDT5. Nuclear ATP generation is required for extensive chromatin remodeling events that are energy-consuming. The protein is Poly(ADP-ribose) glycohydrolase of Homo sapiens (Human).